A 66-amino-acid chain; its full sequence is Cold shock-like protein CspLB (66 aa).

The CSD domain occupies 4 to 63 (GTVKWFNSEKGFGFIEVEGGDDVFVHFSAIEGEGFKTLDEGQSVEFEIVEGQRGPQAEKV).

In terms of assembly, homodimer.

The protein resides in the cytoplasm. The polypeptide is Cold shock-like protein CspLB (cspLB) (Listeria monocytogenes serovar 1/2a (strain ATCC BAA-679 / EGD-e)).